A 342-amino-acid chain; its full sequence is Photosystem II D2 protein (342 aa).

Residues E1–P29 are Cytoplasmic-facing. Residues C30 to T50 form a helical membrane-spanning segment. Residues H51–I113 lie on the Lumenal side of the membrane. Residue H107 participates in chlorophyll a binding. The helical transmembrane segment at G114–P130 threads the bilayer. Pheophytin a-binding residues include Q119 and N132. The Cytoplasmic portion of the chain corresponds to Y131–A141. A helical membrane pass occupies residues V142–S155. Residues S156 to G196 are Lumenal-facing. H187 provides a ligand contact to chlorophyll a. A helical transmembrane segment spans residues G197–E217. A plastoquinone-binding residues include H204 and F251. Residue H204 coordinates Fe cation. The Cytoplasmic segment spans residues G218–T267. H258 provides a ligand contact to Fe cation. The chain crosses the membrane as a helical span at residues G268–R284. The Lumenal segment spans residues S285–L342.

It belongs to the reaction center PufL/M/PsbA/D family. In terms of assembly, PSII is composed of 1 copy each of membrane proteins PsbA, PsbB, PsbC, PsbD, PsbE, PsbF, PsbH, PsbI, PsbJ, PsbK, PsbL, PsbM, PsbT, PsbX, PsbY, PsbZ, Psb30/Ycf12, peripheral proteins PsbO, CyanoQ (PsbQ), PsbU, PsbV and a large number of cofactors. It forms dimeric complexes. It depends on The D1/D2 heterodimer binds P680, chlorophylls that are the primary electron donor of PSII, and subsequent electron acceptors. It shares a non-heme iron and each subunit binds pheophytin, quinone, additional chlorophylls, carotenoids and lipids. There is also a Cl(-1) ion associated with D1 and D2, which is required for oxygen evolution. The PSII complex binds additional chlorophylls, carotenoids and specific lipids. as a cofactor.

The protein resides in the cellular thylakoid membrane. The catalysed reaction is 2 a plastoquinone + 4 hnu + 2 H2O = 2 a plastoquinol + O2. Its function is as follows. Photosystem II (PSII) is a light-driven water:plastoquinone oxidoreductase that uses light energy to abstract electrons from H(2)O, generating O(2) and a proton gradient subsequently used for ATP formation. It consists of a core antenna complex that captures photons, and an electron transfer chain that converts photonic excitation into a charge separation. The D1/D2 (PsbA/PsbD) reaction center heterodimer binds P680, the primary electron donor of PSII as well as several subsequent electron acceptors. D2 is needed for assembly of a stable PSII complex. In Thermostichus vulcanus (Synechococcus vulcanus), this protein is Photosystem II D2 protein.